Reading from the N-terminus, the 975-residue chain is DNA primase (975 aa).

Residues 919 to 958 (CIQHDHRDGRENVQFFLDFRPESATTIWTTLWSRCFSRKC) form a CHC2-type zinc finger.

It belongs to the herpesviridae DNA primase family. Associates with the helicase and the primase-associated factor to form the helicase-primase factor.

Its subcellular location is the host nucleus. Functionally, essential component of the helicase/primase complex. Unwinds the DNA at the replication forks and generates single-stranded DNA for both leading and lagging strand synthesis. The primase initiates primer synthesis and thereby produces large amount of short RNA primers on the lagging strand that the polymerase elongates using dNTPs. The chain is DNA primase from Elephas maximus (Indian elephant).